Reading from the N-terminus, the 704-residue chain is Tetratricopeptide repeat protein 12 (704 aa).

Threonine 71 is modified (phosphothreonine). 3 TPR repeats span residues 105 to 138 (ADALKEKGNEAFVRGDYETAIFFYSEGLGKLKDM), 139 to 172 (KVLYTNRAQAFIKLGDYQKALVDCDWALKCDENC), and 173 to 206 (TKAYFHMGKAHVALKNYSKAKECYQKIEEINPKL).

The protein localises to the cytoplasm. Functionally, cytoplasmic protein that plays a role in the proper assembly of dynein arm complexes in motile cilia in both respiratory cells and sperm flagella. This is Tetratricopeptide repeat protein 12 (Ttc12) from Mus musculus (Mouse).